Here is a 1273-residue protein sequence, read N- to C-terminus: Protein sax-3 (1273 aa).

Residues 1–23 form the signal peptide; the sequence is MFNRKTLLCTILLVLQAVIRSFC. 5 consecutive Ig-like C2-type domains span residues 31-127, 133-222, 227-312, 317-411, and 425-511; these read PVII…GSLK, EDFR…ARLS, PKFE…AHLR, PSFQ…LKVT, and PTIE…ASLT. 5 cysteine pairs are disulfide-bonded: C52/C110, C154/C205, C248/C296, C338/C393, and C446/C495. Fibronectin type-III domains lie at 533–628, 653–750, and 755–849; these read SPTQ…TSKP, QLIK…TAEA, and PPED…MNQD. Residues 874 to 894 form a helical membrane-spanning segment; the sequence is VPVIVIVAILIIFVVIIIAYC. Residues 1033–1273 are disordered; it reads APAMPTNPVP…NNGIVTQEQT (241 aa). Pro residues predominate over residues 1037-1046; sequence PTNPVPPEPP. The segment covering 1096-1105 has biased composition (polar residues); it reads QLHSSDGTGS. The segment covering 1106–1115 has biased composition (basic and acidic residues); that stretch reads SKERTGERRT. Over residues 1125–1136 the composition is skewed to pro residues; the sequence is IPPPPSNPPPPG. Over residues 1145–1156 the composition is skewed to polar residues; sequence QTATRRQLNRGS. Over residues 1207–1222 the composition is skewed to acidic residues; that stretch reads MDDDGGSSEADGENSE. Positions 1240 to 1273 are enriched in polar residues; sequence SASTLAHSCYGTNGTAQRFRSIPRNNGIVTQEQT.

This sequence belongs to the immunoglobulin superfamily. ROBO/SAX3 family. Expressed in the AVG interneuron and the male-specific sensory neuron HOA.

The protein resides in the membrane. In terms of biological role, required to confine migrating sex myoblasts to the ventral muscle quadrants during their migration through the body and for multiple aspects of sensory, motor, and interneuron axon guidance. The chain is Protein sax-3 from Caenorhabditis elegans.